The following is a 419-amino-acid chain: G protein-activated inward rectifier potassium channel 4 (419 aa).

Topologically, residues 1–86 (MAGDSRNAMN…LFTTLVDLKW (86 aa)) are cytoplasmic. At serine 5 the chain carries Phosphoserine. The chain crosses the membrane as a helical span at residues 87–111 (RFNLLVFTMVYTVTWLFFGFIWWLI). Residues 112-135 (AYIRGDLDHVGDQEWIPCVENLSG) are Extracellular-facing. The segment at residues 136–147 (FVSAFLFSIETE) is an intramembrane region (helical; Pore-forming). An intramembrane region (pore-forming) is located at residues 148–154 (TTIGYGF). The short motif at 149–154 (TIGYGF) is the Selectivity filter element. Residues 155 to 163 (RVITEKCPE) lie on the Extracellular side of the membrane. Residues 164 to 185 (GIILLLVQAILGSIVNAFMVGC) form a helical membrane-spanning segment. Residues 186–419 (MFVKISQPKK…GGSREARGSV (234 aa)) are Cytoplasmic-facing. Residues 390–419 (AEAGLDAEAEQNEEDEPKGLGGSREARGSV) are disordered. Positions 394–405 (LDAEAEQNEEDE) are enriched in acidic residues.

The protein belongs to the inward rectifier-type potassium channel (TC 1.A.2.1) family. KCNJ5 subfamily. In terms of assembly, associates with KCNJ3/GIRK1 to form a G-protein-activated heteromultimer pore-forming unit. The resulting inward current is much larger. Associates with KCNJ6/GIRK2 to form a G-protein-activated heteromultimer pore-forming unit. As to expression, islets, exocrine pancreas and heart. Expressed in the adrenal cortex, particularly the zona glomerulosa.

The protein localises to the membrane. It catalyses the reaction K(+)(in) = K(+)(out). With respect to regulation, heteromultimer composed of KCNJ3/GIRK1 and KCNJ5/GIRK4 is activated by phosphatidylinositol 4,5 biphosphate (PtdIns(4,5)P2). Inward rectifier potassium channels are characterized by a greater tendency to allow potassium to flow into the cell rather than out of it. Their voltage dependence is regulated by the concentration of extracellular potassium; as external potassium is raised, the voltage range of the channel opening shifts to more positive voltages. The inward rectification is mainly due to the blockage of outward current by internal magnesium. Can be blocked by external barium. This potassium channel is controlled by G proteins. The protein is G protein-activated inward rectifier potassium channel 4 (KCNJ5) of Homo sapiens (Human).